Here is a 332-residue protein sequence, read N- to C-terminus: Methionine synthase (332 aa).

Positions 211, 213, and 296 each coordinate Zn(2+).

This sequence belongs to the archaeal MetE family. Requires Zn(2+) as cofactor.

Its pathway is amino-acid biosynthesis; L-methionine biosynthesis via de novo pathway. Functionally, catalyzes the transfer of a methyl group to L-homocysteine resulting in methionine formation. The physiological methyl donor is unknown. The chain is Methionine synthase from Saccharolobus islandicus (strain L.S.2.15 / Lassen #1) (Sulfolobus islandicus).